The primary structure comprises 55 residues: Large ribosomal subunit protein bL33 (55 aa).

This sequence belongs to the bacterial ribosomal protein bL33 family.

The polypeptide is Large ribosomal subunit protein bL33 (Methylobacterium nodulans (strain LMG 21967 / CNCM I-2342 / ORS 2060)).